The following is a 376-amino-acid chain: Adipocyte plasma membrane-associated protein (376 aa).

Residues 1-17 (MTFLMLAVSLAIPLLGA) traverse the membrane as a helical segment. A glycan (N-linked (GlcNAc...) asparagine) is linked at asparagine 120.

Belongs to the strictosidine synthase family.

The protein resides in the membrane. Functionally, exhibits strong arylesterase activity with beta-naphthyl acetate and phenyl acetate. May play a role in adipocyte differentiation. The polypeptide is Adipocyte plasma membrane-associated protein (Apmap) (Rattus norvegicus (Rat)).